A 125-amino-acid chain; its full sequence is Ribosome-binding factor A (125 aa).

Belongs to the RbfA family. As to quaternary structure, monomer. Binds 30S ribosomal subunits, but not 50S ribosomal subunits or 70S ribosomes.

It is found in the cytoplasm. Its function is as follows. One of several proteins that assist in the late maturation steps of the functional core of the 30S ribosomal subunit. Associates with free 30S ribosomal subunits (but not with 30S subunits that are part of 70S ribosomes or polysomes). Required for efficient processing of 16S rRNA. May interact with the 5'-terminal helix region of 16S rRNA. This is Ribosome-binding factor A from Xylella fastidiosa (strain 9a5c).